The primary structure comprises 164 residues: Phosphopantetheine adenylyltransferase (164 aa).

A substrate-binding site is contributed by Ser-9. ATP-binding positions include 9–10 (SF) and His-17. Positions 41, 73, and 87 each coordinate substrate. ATP contacts are provided by residues 88 to 90 (GLR), Glu-98, and 123 to 129 (YSYISSS).

This sequence belongs to the bacterial CoaD family. In terms of assembly, homohexamer. The cofactor is Mg(2+).

It is found in the cytoplasm. It carries out the reaction (R)-4'-phosphopantetheine + ATP + H(+) = 3'-dephospho-CoA + diphosphate. Its pathway is cofactor biosynthesis; coenzyme A biosynthesis; CoA from (R)-pantothenate: step 4/5. Its function is as follows. Reversibly transfers an adenylyl group from ATP to 4'-phosphopantetheine, yielding dephospho-CoA (dPCoA) and pyrophosphate. This is Phosphopantetheine adenylyltransferase from Clostridium perfringens (strain 13 / Type A).